The sequence spans 323 residues: Glucokinase (323 aa).

8-13 (GDVGGT) is a binding site for ATP.

Belongs to the bacterial glucokinase family.

It is found in the cytoplasm. The catalysed reaction is D-glucose + ATP = D-glucose 6-phosphate + ADP + H(+). The polypeptide is Glucokinase (Yersinia pseudotuberculosis serotype I (strain IP32953)).